The primary structure comprises 363 residues: MSPSIVFTGGGTAGHVTPNIALIKEFRKEGWNVEYIGSVSGIEKEMIEPMDIPFHGVSSGKLRRYFSLKNLLDPFKIVLGIIQSSLLFYKIKPDVVFSKGGFVAFPVVVGAWLNRIPVVAHESDMSPGLANRLSFPFVNKICLTFDAGKKYFKRQDKIEVTGTQISSQLLTGNPMKGLEVCRFISSKTCLLVMGGSLGAGSINSCIRSALKQLTSEFQVIHLCGKGKLDSSLVGVEGYCQFEYANEELADLFAASSVVISRAGANSLYEILALGKPHILIPISSQVSRGDQIQNARYFQGLGISVVIQDELLKADVLLQAVQDVMRKKDEIDNKIKALKIESATDKIVAIIKEQAHVQTPRIV.

Residues 12 to 14 (TAG), Ser-196, and Gln-291 each bind UDP-N-acetyl-alpha-D-glucosamine.

It belongs to the glycosyltransferase 28 family. MurG subfamily.

It localises to the cell inner membrane. The enzyme catalyses di-trans,octa-cis-undecaprenyl diphospho-N-acetyl-alpha-D-muramoyl-L-alanyl-D-glutamyl-meso-2,6-diaminopimeloyl-D-alanyl-D-alanine + UDP-N-acetyl-alpha-D-glucosamine = di-trans,octa-cis-undecaprenyl diphospho-[N-acetyl-alpha-D-glucosaminyl-(1-&gt;4)]-N-acetyl-alpha-D-muramoyl-L-alanyl-D-glutamyl-meso-2,6-diaminopimeloyl-D-alanyl-D-alanine + UDP + H(+). Its pathway is cell wall biogenesis; peptidoglycan biosynthesis. Cell wall formation. Catalyzes the transfer of a GlcNAc subunit on undecaprenyl-pyrophosphoryl-MurNAc-pentapeptide (lipid intermediate I) to form undecaprenyl-pyrophosphoryl-MurNAc-(pentapeptide)GlcNAc (lipid intermediate II). This is UDP-N-acetylglucosamine--N-acetylmuramyl-(pentapeptide) pyrophosphoryl-undecaprenol N-acetylglucosamine transferase from Legionella pneumophila (strain Corby).